The primary structure comprises 152 residues: Superoxide dismutase [Cu-Zn] 4A (152 aa).

Cu cation contacts are provided by histidine 45, histidine 47, and histidine 62. A disulfide bond links cysteine 56 and cysteine 145. Zn(2+)-binding residues include histidine 62, histidine 70, histidine 79, and aspartate 82. Histidine 119 is a Cu cation binding site.

It belongs to the Cu-Zn superoxide dismutase family. In terms of assembly, homodimer. Cu cation is required as a cofactor. Requires Zn(2+) as cofactor.

Its subcellular location is the cytoplasm. It catalyses the reaction 2 superoxide + 2 H(+) = H2O2 + O2. In terms of biological role, destroys radicals which are normally produced within the cells and which are toxic to biological systems. This Zea mays (Maize) protein is Superoxide dismutase [Cu-Zn] 4A (SODCC.3).